We begin with the raw amino-acid sequence, 158 residues long: MSGIALSRLAQERKAWRKDHPFGFVAVPTKNPDGTMNLMNWECAIPGKKGTPWEGGLFKLRMLFKDDYPSSPPKCKFEPPLFHPNVYPSGTVCLSILEEDKDWRPAITIKQILLGIQELLNEPNIQDPAQAEAYTIYCQNRVEYEKRVRAQAKKFAPS.

The UBC core domain maps to 4-157 (IALSRLAQER…VRAQAKKFAP (154 aa)). Residues 13-18 (RKAWRK) form an interaction with SUMO1 region. Residue cysteine 93 is the Glycyl thioester intermediate of the active site.

It belongs to the ubiquitin-conjugating enzyme family. In terms of assembly, interacts with SOX9.

It is found in the nucleus. The protein localises to the cytoplasm. The protein operates within protein modification; protein sumoylation. Functionally, accepts the ubiquitin-like proteins SUMO1, SUMO2 and SUMO3 from the UBLE1A-UBLE1B E1 complex and catalyzes their covalent attachment to other proteins with the help of an E3 ligase such as RANBP2 or CBX4. Essential for nuclear architecture and chromosome segregation. This is SUMO-conjugating enzyme UBC9 (UBE2I) from Gallus gallus (Chicken).